Reading from the N-terminus, the 265-residue chain is 14-3-3-like protein GF14 nu (265 aa).

Ser67, Ser109, and Ser190 each carry phosphoserine. At Thr211 the chain carries Phosphothreonine. The interval 242-265 (AGGDEIKEASKHEPEEGKPAETGQ) is disordered. Basic and acidic residues predominate over residues 245–265 (DEIKEASKHEPEEGKPAETGQ).

Belongs to the 14-3-3 family. As to quaternary structure, component of the SERK1 signaling complex, composed of KAPP, CDC48A, GRF6 or GRF7, SERK1, SERK2, SERK3/BAK1 and BRI1. Interacts with DREB1A and DREB1B in the nucleus. Interacts with CINV1.

It localises to the nucleus. Its subcellular location is the cytoplasm. Functionally, is associated with a DNA binding complex that binds to the G box, a well-characterized cis-acting DNA regulatory element found in plant genes. This is 14-3-3-like protein GF14 nu (GRF7) from Arabidopsis thaliana (Mouse-ear cress).